Reading from the N-terminus, the 134-residue chain is MILACDVGLKRIGIAALLNGVILPLEAILRHNRNQASRDLSDLLREKNIQVLVVGKPHESYADTNARIEHFIKLVDFKGEIVFINEDRSSIEAYENLEHLGKKNKRLAIKDGRLDSLSACRILERYCQKVLKNH.

Belongs to the YqgF nuclease family.

Its subcellular location is the cytoplasm. In terms of biological role, could be a nuclease involved in processing of the 5'-end of pre-16S rRNA. The chain is Putative pre-16S rRNA nuclease from Helicobacter pylori (strain ATCC 700392 / 26695) (Campylobacter pylori).